Consider the following 269-residue polypeptide: Protein OPG079 (269 aa).

The protein belongs to the orthopoxvirus OPG079 family. In terms of assembly, homoomultimer (Potential). Interacts with the small subunit of ribonucleotide reductase. Interacts with host FAM111A; this interaction protomtes OPG079 degradation through autophagy.

The protein localises to the host cytoplasm. Functionally, plays an essential role in viral DNA replication. Binds to ssDNA with high affinity and localizes to cytoplasmic factories where nascent viral genomes accumulate. May disrupt loops, hairpins and other secondary structures present on ssDNA to reduce and eliminate pausing of viral DNA polymerase at specific sites during elongation. The polypeptide is Protein OPG079 (OPG079) (Variola virus (isolate Human/India/Ind3/1967) (VARV)).